The following is a 325-amino-acid chain: ATP-dependent 6-phosphofructokinase (325 aa).

Gly-12 lines the ATP pocket. 22 to 26 (RTIVK) lines the ADP pocket. ATP contacts are provided by residues 73-74 (RY) and 103-106 (GDGS). Asp-104 is a binding site for Mg(2+). Position 126-128 (126-128 (TID)) interacts with substrate. Asp-128 functions as the Proton acceptor in the catalytic mechanism. An ADP-binding site is contributed by Arg-155. 170–172 (MGH) serves as a coordination point for substrate. ADP-binding positions include 186-188 (GAE), Lys-213, and 215-217 (KRS). Substrate is bound by residues Glu-224, Arg-246, and 252–255 (HTQR).

This sequence belongs to the phosphofructokinase type A (PFKA) family. ATP-dependent PFK group I subfamily. Prokaryotic clade 'B1' sub-subfamily. Homotetramer. The cofactor is Mg(2+).

It localises to the cytoplasm. It carries out the reaction beta-D-fructose 6-phosphate + ATP = beta-D-fructose 1,6-bisphosphate + ADP + H(+). It functions in the pathway carbohydrate degradation; glycolysis; D-glyceraldehyde 3-phosphate and glycerone phosphate from D-glucose: step 3/4. Its activity is regulated as follows. Allosterically activated by ADP and other diphosphonucleosides, and allosterically inhibited by phosphoenolpyruvate. Catalyzes the phosphorylation of D-fructose 6-phosphate to fructose 1,6-bisphosphate by ATP, the first committing step of glycolysis. The sequence is that of ATP-dependent 6-phosphofructokinase from Mycoplasma mobile (strain ATCC 43663 / 163K / NCTC 11711) (Mesomycoplasma mobile).